A 542-amino-acid chain; its full sequence is CTP synthase (542 aa).

An amidoligase domain region spans residues 1–265 (MARYIFITGG…DSEVLCAFGI (265 aa)). Ser-13 provides a ligand contact to CTP. A UTP-binding site is contributed by Ser-13. Residue 14-19 (SLGKGI) coordinates ATP. Position 54 (Tyr-54) interacts with L-glutamine. Asp-71 serves as a coordination point for ATP. Positions 71 and 139 each coordinate Mg(2+). CTP contacts are provided by residues 146-148 (DIE), 186-191 (KTKPTQ), and Lys-222. UTP contacts are provided by residues 186–191 (KTKPTQ) and Lys-222. In terms of domain architecture, Glutamine amidotransferase type-1 spans 291–541 (TIAVVGKYTG…IEATVEQSRL (251 aa)). Ala-353 is a binding site for L-glutamine. The Nucleophile; for glutamine hydrolysis role is filled by Cys-380. Residues 381–384 (FGMQ), Glu-404, and Arg-469 contribute to the L-glutamine site. Residues His-514 and Glu-516 contribute to the active site.

This sequence belongs to the CTP synthase family. In terms of assembly, homotetramer.

The enzyme catalyses UTP + L-glutamine + ATP + H2O = CTP + L-glutamate + ADP + phosphate + 2 H(+). The catalysed reaction is L-glutamine + H2O = L-glutamate + NH4(+). It carries out the reaction UTP + NH4(+) + ATP = CTP + ADP + phosphate + 2 H(+). It functions in the pathway pyrimidine metabolism; CTP biosynthesis via de novo pathway; CTP from UDP: step 2/2. Allosterically activated by GTP, when glutamine is the substrate; GTP has no effect on the reaction when ammonia is the substrate. The allosteric effector GTP functions by stabilizing the protein conformation that binds the tetrahedral intermediate(s) formed during glutamine hydrolysis. Inhibited by the product CTP, via allosteric rather than competitive inhibition. In terms of biological role, catalyzes the ATP-dependent amination of UTP to CTP with either L-glutamine or ammonia as the source of nitrogen. Regulates intracellular CTP levels through interactions with the four ribonucleotide triphosphates. This chain is CTP synthase, found in Bartonella quintana (strain Toulouse) (Rochalimaea quintana).